The primary structure comprises 377 residues: WAT1-related protein At5g13670 (377 aa).

The next 10 membrane-spanning stretches (helical) occupy residues 9–29 (FIAIVFIQCLYALMSIVAKLA), 38–58 (VLVAYRMAVASALITPFALIL), 64–84 (PKLTFKILLQIAILSLFEPVV), 99–119 (TFTSALCNALPAMTFIMACVF), 136–156 (VGTMVAIGGAMLMTFVKGNVI), 187–207 (IMLVASCFSWSCYIILQAKIL), 214–234 (LSLTALMCIMGMLEATVMGLI), 251–271 (LLASIYGGLVSGLAYYVIGWA), 279–299 (FVSAFNPLSMVLVAILSTFVF), and 303–323 (VYVGRVIGSVVIVIGIYLVLW). EamA domains follow at residues 18–149 (LYAL…MLMT) and 194–322 (FSWS…YLVL).

It belongs to the drug/metabolite transporter (DMT) superfamily. Plant drug/metabolite exporter (P-DME) (TC 2.A.7.4) family.

It localises to the membrane. The sequence is that of WAT1-related protein At5g13670 from Arabidopsis thaliana (Mouse-ear cress).